Here is a 433-residue protein sequence, read N- to C-terminus: Probable RNA 3'-terminal phosphate cyclase (433 aa).

Over residues Met1–Asn10 the composition is skewed to low complexity. Positions Met1–Gln28 are disordered. Over residues Asn18–Gln28 the composition is skewed to polar residues. ATP-binding positions include Gln137 and Tyr328–Gln332. His354 serves as the catalytic Tele-AMP-histidine intermediate. The segment at Leu400–Lys433 is disordered. Residues Asn401–Ile425 show a composition bias toward low complexity.

It belongs to the RNA 3'-terminal cyclase family. Type 1 subfamily.

The protein resides in the nucleus. Its subcellular location is the nucleoplasm. It carries out the reaction a 3'-end 3'-phospho-ribonucleotide-RNA + ATP = a 3'-end 2',3'-cyclophospho-ribonucleotide-RNA + AMP + diphosphate. Functionally, catalyzes the conversion of 3'-phosphate to a 2',3'-cyclic phosphodiester at the end of RNA. The mechanism of action of the enzyme occurs in 3 steps: (A) adenylation of the enzyme by ATP; (B) transfer of adenylate to an RNA-N3'P to produce RNA-N3'PP5'A; (C) and attack of the adjacent 2'-hydroxyl on the 3'-phosphorus in the diester linkage to produce the cyclic end product. The biological role of this enzyme is unknown but it is likely to function in some aspects of cellular RNA processing. The protein is Probable RNA 3'-terminal phosphate cyclase (rtca) of Dictyostelium discoideum (Social amoeba).